The following is a 511-amino-acid chain: Ent-copalyl diphosphate synthase (511 aa).

2 residues coordinate a divalent metal cation: aspartate 291 and aspartate 293. The DXDD motif signature appears at 291–294; the sequence is DSDD.

Belongs to the terpene synthase family. As to quaternary structure, homodimer. It depends on a divalent metal cation as a cofactor.

The catalysed reaction is (2E,6E,10E)-geranylgeranyl diphosphate = ent-copalyl diphosphate. It participates in antibiotic biosynthesis. Functionally, involved in viguiepinol biosynthesis. Catalyzes the conversion of geranylgeranyl diphosphate (GGDP) into copalyl diphosphate (ent-CDP). The polypeptide is Ent-copalyl diphosphate synthase (Streptomyces sp. (strain KO-3988)).